The chain runs to 250 residues: 5'-nucleotidase SurE (250 aa).

A divalent metal cation-binding residues include aspartate 8, aspartate 9, serine 40, and asparagine 95.

It belongs to the SurE nucleotidase family. A divalent metal cation serves as cofactor.

The protein resides in the cytoplasm. The catalysed reaction is a ribonucleoside 5'-phosphate + H2O = a ribonucleoside + phosphate. In terms of biological role, nucleotidase that shows phosphatase activity on nucleoside 5'-monophosphates. This Nitratidesulfovibrio vulgaris (strain DP4) (Desulfovibrio vulgaris) protein is 5'-nucleotidase SurE.